A 312-amino-acid chain; its full sequence is Ribosomal protein L11 methyltransferase (312 aa).

4 residues coordinate S-adenosyl-L-methionine: Thr-160, Gly-181, Asp-203, and Asn-246.

It belongs to the methyltransferase superfamily. PrmA family.

The protein localises to the cytoplasm. It carries out the reaction L-lysyl-[protein] + 3 S-adenosyl-L-methionine = N(6),N(6),N(6)-trimethyl-L-lysyl-[protein] + 3 S-adenosyl-L-homocysteine + 3 H(+). Functionally, methylates ribosomal protein L11. In Staphylococcus aureus (strain JH1), this protein is Ribosomal protein L11 methyltransferase.